The sequence spans 227 residues: uncharacterized protein (227 aa).

The next 2 membrane-spanning stretches (helical) occupy residues 12 to 32 and 80 to 100; these read IVLFLIINILPILILGLYLYA and IILINGIYIGNHGSFGIKIPL.

It is found in the cell membrane. This is an uncharacterized protein from Methanocaldococcus jannaschii (strain ATCC 43067 / DSM 2661 / JAL-1 / JCM 10045 / NBRC 100440) (Methanococcus jannaschii).